Consider the following 211-residue polypeptide: Heat shock 70 kDa protein 4L (211 aa).

Ser-161 is modified (phosphoserine).

This sequence belongs to the heat shock protein 70 family. As to quaternary structure, homodimer.

It is found in the cytoplasm. The protein resides in the nucleus. Possesses chaperone activity in vitro where it inhibits aggregation of citrate synthase. The protein is Heat shock 70 kDa protein 4L of Mesocricetus auratus (Golden hamster).